Here is a 471-residue protein sequence, read N- to C-terminus: Ribulose bisphosphate carboxylase large chain (471 aa).

An N6,N6,N6-trimethyllysine modification is found at Lys-5. Residues Asn-114 and Thr-164 each contribute to the substrate site. Residue Lys-166 is the Proton acceptor of the active site. Lys-168 is a substrate binding site. Lys-192, Asp-194, and Glu-195 together coordinate Mg(2+). Lys-192 is subject to N6-carboxylysine. Residue His-285 is the Proton acceptor of the active site. Residues Arg-286, His-318, and Ser-370 each contribute to the substrate site.

Belongs to the RuBisCO large chain family. Type I subfamily. As to quaternary structure, heterohexadecamer of 8 large chains and 8 small chains; disulfide-linked. The disulfide link is formed within the large subunit homodimers. Requires Mg(2+) as cofactor. The disulfide bond which can form in the large chain dimeric partners within the hexadecamer appears to be associated with oxidative stress and protein turnover.

It localises to the plastid. The protein localises to the chloroplast. The catalysed reaction is 2 (2R)-3-phosphoglycerate + 2 H(+) = D-ribulose 1,5-bisphosphate + CO2 + H2O. The enzyme catalyses D-ribulose 1,5-bisphosphate + O2 = 2-phosphoglycolate + (2R)-3-phosphoglycerate + 2 H(+). In terms of biological role, ruBisCO catalyzes two reactions: the carboxylation of D-ribulose 1,5-bisphosphate, the primary event in carbon dioxide fixation, as well as the oxidative fragmentation of the pentose substrate in the photorespiration process. Both reactions occur simultaneously and in competition at the same active site. This Schlumbergera truncata (Thanksgiving cactus) protein is Ribulose bisphosphate carboxylase large chain.